The following is a 266-amino-acid chain: Early E1A protein (266 aa).

The interval 39–47 (MSLHEMYDL) is interaction with RB1 in competition with E2F1. The PXLXP motif, interaction with host ZMYND11 signature appears at 94–98 (PELQP). Residues 103–107 (LFCYE) carry the LXCXE motif, interaction with host RB1 motif. A zinc finger lies at 160-180 (CSSCDYHRKTSGCPEILCSLC). Residues 193-244 (VSDSEPDEPDSTTADSNHGSPPTLRCTPPRDLPRPVPVKASPGKRPAVNSLH) form a disordered region. A compositionally biased stretch (polar residues) spans 203–212 (STTADSNHGS). The PXDLS motif, CTBP-binding signature appears at 255–259 (PLDLS). The Nuclear localization signal motif lies at 261 to 265 (KRSRS).

This sequence belongs to the adenoviridae E1A protein family. Interacts with host UBE2I; this interaction interferes with polySUMOylation. Interacts with host RB1; this interaction induces the aberrant dissociation of RB1-E2F1 complex thereby disrupting the activity of RB1 and activating E2F1-regulated genes. Interacts with host ATF7; the interaction enhances ATF7-mediated viral transactivation activity which requires the zinc binding domains of both proteins. Isoform early E1A 32 kDa protein and isoform early E1A 26 kDa protein interact (via N-terminus) with CUL1 and E3 ubiquitin ligase RBX1; these interactions inhibit RBX1-CUL1-dependent elongation reaction of ubiquitin chains and attenuate ubiquitination of SCF(FBXW7) target proteins. Interacts (via PXLXP motif) with host ZMYND11/BS69 (via MYND-type zinc finger); this interaction inhibits E1A mediated transactivation. Interacts with host EP300; this interaction stimulates the acetylation of RB1 by recruiting EP300 and RB1 into a multimeric-protein complex. Interacts with host CTBP1 and CTBP2; this interaction seems to potentiate viral replication. Interacts with host DCAF7. Interacts with host DYRK1A. Interacts with host KPNA4; this interaction allows E1A import into the host nucleus. Interacts with host EP400; this interaction stabilizes MYC. Interacts with host TBP protein; this interaction probably disrupts the TBP-TATA complex.

It localises to the host nucleus. Plays a role in viral genome replication by driving entry of quiescent cells into the cell cycle. Stimulation of progression from G1 to S phase allows the virus to efficiently use the cellular DNA replicating machinery to achieve viral genome replication. E1A protein has both transforming and trans-activating activities. Induces the disassembly of the E2F1 transcription factor from RB1 by direct competition for the same binding site on RB1, with subsequent transcriptional activation of E2F1-regulated S-phase genes and of the E2 region of the adenoviral genome. Release of E2F1 leads to the ARF-mediated inhibition of MDM2 and causes TP53/p53 to accumulate because it is not targeted for degradation by MDM2-mediated ubiquitination anymore. This increase in TP53, in turn, would arrest the cell proliferation and direct its death but this effect is counteracted by the viral protein E1B-55K. Inactivation of the ability of RB1 to arrest the cell cycle is critical for cellular transformation, uncontrolled cellular growth and proliferation induced by viral infection. Interaction with RBX1 and CUL1 inhibits ubiquitination of the proteins targeted by SCF(FBXW7) ubiquitin ligase complex, and may be linked to unregulated host cell proliferation. The tumorigenesis-restraining activity of E1A may be related to the disruption of the host CtBP-CtIP complex through the CtBP binding motif. The chain is Early E1A protein from Simian adenovirus serotype 7 (SAdV-7).